Consider the following 332-residue polypeptide: Stage II sporulation protein B (332 aa).

Basic residues predominate over residues 1–10; sequence MKKRKNKKNS. The tract at residues 1 to 71 is disordered; sequence MKKRKNKKNS…EHPDEDEFNW (71 aa). The segment covering 11 to 27 has biased composition (basic and acidic residues); the sequence is KAAEKALKVTINGKEET. Residues 112 to 132 form a helical membrane-spanning segment; it reads AATIAFAAVIGTGLGLFALNI. A disordered region spans residues 139–174; that stretch reads SAPASLEDSLGSQTAKAGDTSADKQTSGAEKQAAQT. Residues 161–174 are compositionally biased toward polar residues; sequence DKQTSGAEKQAAQT. An SPOR domain is found at 175 to 250; that stretch reads EGTYKTYAVQ…SDFEAWGGKE (76 aa).

The protein resides in the cell membrane. Appears to be degraded early in engulfment, in correlation with its loss from polar septa. Its function is as follows. Facilitates the rapid and spatially regulated dissolution of septal peptidoglycan. In Bacillus subtilis (strain 168), this protein is Stage II sporulation protein B.